A 370-amino-acid chain; its full sequence is Peptide chain release factor 1 (370 aa).

Residue Gln-237 is modified to N5-methylglutamine. The segment covering 286 to 296 has biased composition (basic and acidic residues); that stretch reads ERQRSARDATR. A disordered region spans residues 286–310; it reads ERQRSARDATRKSQVGTGDRSEKIR.

This sequence belongs to the prokaryotic/mitochondrial release factor family. Post-translationally, methylated by PrmC. Methylation increases the termination efficiency of RF1.

Its subcellular location is the cytoplasm. Functionally, peptide chain release factor 1 directs the termination of translation in response to the peptide chain termination codons UAG and UAA. This chain is Peptide chain release factor 1, found in Anaeromyxobacter dehalogenans (strain 2CP-C).